Consider the following 151-residue polypeptide: Ribosome maturation factor RimP (151 aa).

The protein belongs to the RimP family.

Its subcellular location is the cytoplasm. In terms of biological role, required for maturation of 30S ribosomal subunits. This Shewanella denitrificans (strain OS217 / ATCC BAA-1090 / DSM 15013) protein is Ribosome maturation factor RimP.